A 469-amino-acid polypeptide reads, in one-letter code: 3-isopropylmalate dehydratase large subunit (469 aa).

Residues cysteine 347, cysteine 407, and cysteine 410 each coordinate [4Fe-4S] cluster.

It belongs to the aconitase/IPM isomerase family. LeuC type 1 subfamily. Heterodimer of LeuC and LeuD. [4Fe-4S] cluster is required as a cofactor.

It carries out the reaction (2R,3S)-3-isopropylmalate = (2S)-2-isopropylmalate. It functions in the pathway amino-acid biosynthesis; L-leucine biosynthesis; L-leucine from 3-methyl-2-oxobutanoate: step 2/4. Catalyzes the isomerization between 2-isopropylmalate and 3-isopropylmalate, via the formation of 2-isopropylmaleate. This is 3-isopropylmalate dehydratase large subunit from Prochlorococcus marinus subsp. pastoris (strain CCMP1986 / NIES-2087 / MED4).